The following is a 147-amino-acid chain: MMVFRLLKNYSLYFAWLTALIATLGSLYLSLVRHIPVCDLCWYQRVCIYPLTILLGIAAYRTDRGVVKYALPLVVLGFLFSIYQYLQQMIPGFAPINLCGSTSPHCSEIHWEIFGFITLPFLGMLATLIMSFFLIMAFYSLDKRLAN.

The chain crosses the membrane as a helical span at residues 9–28 (NYSLYFAWLTALIATLGSLY). A disulfide bond links Cys38 and Cys41. 2 helical membrane-spanning segments follow: residues 43–62 (YQRV…AYRT) and 69–86 (YALP…YQYL). A disulfide bridge connects residues Cys99 and Cys106. The helical transmembrane segment at 115 to 138 (GFITLPFLGMLATLIMSFFLIMAF) threads the bilayer.

This sequence belongs to the DsbB family. BdbC subfamily.

The protein resides in the cell inner membrane. Required for disulfide bond formation in some proteins. The protein is Probable disulfide formation protein of Coxiella burnetii (strain CbuK_Q154) (Coxiella burnetii (strain Q154)).